Here is a 750-residue protein sequence, read N- to C-terminus: Photosystem I P700 chlorophyll a apoprotein A1 (750 aa).

A run of 8 helical transmembrane segments spans residues 70–93 (VFSA…FHGA), 156–179 (LYCT…FHYH), 195–219 (LNHH…HVSL), 291–309 (IAHH…GHMY), 346–369 (WHAQ…HHMY), 385–411 (LSLF…IFMV), 433–455 (AIIS…LYIH), and 531–549 (FLVH…LILL). 2 residues coordinate [4Fe-4S] cluster: Cys573 and Cys582. The next 2 helical transmembrane spans lie at 589-610 (HVFL…HFSW) and 664-686 (LSAY…MFLF). His675 lines the chlorophyll a' pocket. Residues Met683 and Tyr691 each coordinate chlorophyll a. Trp692 is a phylloquinone binding site. Residues 724–744 (AVGVTHYLLGGIATTWAFFLA) traverse the membrane as a helical segment.

This sequence belongs to the PsaA/PsaB family. As to quaternary structure, the PsaA/B heterodimer binds the P700 chlorophyll special pair and subsequent electron acceptors. PSI consists of a core antenna complex that captures photons, and an electron transfer chain that converts photonic excitation into a charge separation. The eukaryotic PSI reaction center is composed of at least 11 subunits. P700 is a chlorophyll a/chlorophyll a' dimer, A0 is one or more chlorophyll a, A1 is one or both phylloquinones and FX is a shared 4Fe-4S iron-sulfur center. is required as a cofactor.

The protein resides in the plastid. The protein localises to the chloroplast thylakoid membrane. The catalysed reaction is reduced [plastocyanin] + hnu + oxidized [2Fe-2S]-[ferredoxin] = oxidized [plastocyanin] + reduced [2Fe-2S]-[ferredoxin]. Functionally, psaA and PsaB bind P700, the primary electron donor of photosystem I (PSI), as well as the electron acceptors A0, A1 and FX. PSI is a plastocyanin-ferredoxin oxidoreductase, converting photonic excitation into a charge separation, which transfers an electron from the donor P700 chlorophyll pair to the spectroscopically characterized acceptors A0, A1, FX, FA and FB in turn. Oxidized P700 is reduced on the lumenal side of the thylakoid membrane by plastocyanin. In Populus trichocarpa (Western balsam poplar), this protein is Photosystem I P700 chlorophyll a apoprotein A1.